The sequence spans 419 residues: Tyrosine--tRNA ligase (419 aa).

Residue Tyr34 participates in L-tyrosine binding. Residues Pro39–His48 carry the 'HIGH' region motif. The L-tyrosine site is built by Tyr169, Gln173, and Asp176. The short motif at Lys230–Thr234 is the 'KMSKS' region element. ATP is bound at residue Lys233. In terms of domain architecture, S4 RNA-binding spans Val352 to Ala419.

This sequence belongs to the class-I aminoacyl-tRNA synthetase family. TyrS type 1 subfamily. As to quaternary structure, homodimer.

Its subcellular location is the cytoplasm. The enzyme catalyses tRNA(Tyr) + L-tyrosine + ATP = L-tyrosyl-tRNA(Tyr) + AMP + diphosphate + H(+). In terms of biological role, catalyzes the attachment of tyrosine to tRNA(Tyr) in a two-step reaction: tyrosine is first activated by ATP to form Tyr-AMP and then transferred to the acceptor end of tRNA(Tyr). This is Tyrosine--tRNA ligase (tyrS) from Geobacillus stearothermophilus (Bacillus stearothermophilus).